The chain runs to 351 residues: Hydroxymethylglutaryl-CoA synthase (351 aa).

The active-site Proton donor/acceptor is glutamate 80. The Acyl-thioester intermediate role is filled by cysteine 112. Residues cysteine 112 and serine 153 each coordinate (3S)-3-hydroxy-3-methylglutaryl-CoA. Arginine 199 lines the CoA pocket. The (3S)-3-hydroxy-3-methylglutaryl-CoA site is built by threonine 201 and histidine 234. Catalysis depends on histidine 234, which acts as the Proton donor/acceptor. A CoA-binding site is contributed by lysine 239. (3S)-3-hydroxy-3-methylglutaryl-CoA-binding residues include arginine 243, asparagine 266, and serine 296.

Belongs to the thiolase-like superfamily. Archaeal HMG-CoA synthase family. As to quaternary structure, interacts with acetoacetyl-CoA thiolase that catalyzes the precedent step in the pathway and with a DUF35 protein. The acetoacetyl-CoA thiolase/HMG-CoA synthase complex channels the intermediate via a fused CoA-binding site, which allows for efficient coupling of the endergonic thiolase reaction with the exergonic HMGCS reaction.

It carries out the reaction acetoacetyl-CoA + acetyl-CoA + H2O = (3S)-3-hydroxy-3-methylglutaryl-CoA + CoA + H(+). The protein operates within metabolic intermediate biosynthesis; (R)-mevalonate biosynthesis; (R)-mevalonate from acetyl-CoA: step 2/3. Functionally, catalyzes the condensation of acetyl-CoA with acetoacetyl-CoA to form 3-hydroxy-3-methylglutaryl-CoA (HMG-CoA). Functions in the mevalonate (MVA) pathway leading to isopentenyl diphosphate (IPP), a key precursor for the biosynthesis of isoprenoid compounds that are building blocks of archaeal membrane lipids. The polypeptide is Hydroxymethylglutaryl-CoA synthase (Thermoplasma volcanium (strain ATCC 51530 / DSM 4299 / JCM 9571 / NBRC 15438 / GSS1)).